A 518-amino-acid polypeptide reads, in one-letter code: MGSIIISALLALVIGAVVGFFVRKSIAEAKIGGAKAAAEQLIEEAKRAADALKKEALLEAKDEIHKLRTEAEHDIRDRRSELQKQENRLMQKEENLDRKDEALNKREALLEAKEEALNERQQHIEQMESKVETLIKQQQTELERISGLTRDDARHLILERVEKELSHEIAMMVKEAETRAKEEADKRAKAILSLAIQRCAADHVAETTVSVVNLPNDEMKGRIIGREGRNIRTLETLTGIDLIIDDTPEAVILSGFDPIRRETARIALDKLVQDGRIHPARIEEMVGKARREVDEHIREVGEQTTFEVGVHGLHPDLIKILGRLKFRTSYGQNVLKHSVEVAFLAGLMAAELGEDEMLARRAGLLHDIGKAIDHEVEGSHVEIGVELATKYKEHPVVINSIASHHGDTEPTSVIAVLVAAADALSAARPGARSETLENYIRRLEKLEEIAESYEGVEKSYAIQAGREVRIMVKPDMIDDLEAHRLARDIRKRIEEELDYPGHIKVTVIRETRAVEYAK.

The chain crosses the membrane as a helical span at residues 2–22; that stretch reads GSIIISALLALVIGAVVGFFV. The KH domain occupies 208 to 271; sequence TVSVVNLPND…ETARIALDKL (64 aa). An HD domain is found at 334–427; it reads VLKHSVEVAF…VAAADALSAA (94 aa).

Belongs to the RNase Y family.

It is found in the cell membrane. Endoribonuclease that initiates mRNA decay. The protein is Ribonuclease Y of Geobacillus thermodenitrificans (strain NG80-2).